The primary structure comprises 476 residues: Growth/differentiation factor 10 (476 aa).

Residues 1-29 (MAPGLARISLRSQLLPLVPLLLLLRGAGC) form the signal peptide. The propeptide occupies 30–366 (GHRVPSWSSL…EKTMQKARRR (337 aa)). Residues asparagine 114, asparagine 152, and asparagine 277 are each glycosylated (N-linked (GlcNAc...) asparagine). Disordered regions lie at residues 268–305 (GDFEPGAAPNSSADPRVRRAAQVSKPLQDNELPGLDER) and 330–358 (PRTGRKDRKKKDQDTFTPSSSQVLDFDEK). 3 disulfide bridges follow: cysteine 374–cysteine 441, cysteine 403–cysteine 473, and cysteine 407–cysteine 475. Asparagine 467 carries an N-linked (GlcNAc...) asparagine glycan.

It belongs to the TGF-beta family. In terms of assembly, homodimer or heterodimer. Can form a non-covalent complex of the mature region and the pro-region. Costa, costicartilage, femur, calvaria, trachea, aorta and brain. Predominantly in the cerebellum.

The protein localises to the secreted. Growth factor involved in osteogenesis and adipogenesis. Plays an inhibitory role in the process of osteoblast differentiation via SMAD2/3 pathway. Plays an inhibitory role in the process of adipogenesis. The chain is Growth/differentiation factor 10 from Rattus norvegicus (Rat).